We begin with the raw amino-acid sequence, 399 residues long: Phosphoglycerate kinase (399 aa).

Substrate-binding positions include 21–23 (DFN), Arg-36, 59–62 (HLGR), Arg-120, and Arg-158. ATP is bound by residues Lys-209, Gly-297, Glu-328, and 355 to 358 (GGDS).

This sequence belongs to the phosphoglycerate kinase family. In terms of assembly, monomer.

The protein resides in the cytoplasm. The catalysed reaction is (2R)-3-phosphoglycerate + ATP = (2R)-3-phospho-glyceroyl phosphate + ADP. It functions in the pathway carbohydrate degradation; glycolysis; pyruvate from D-glyceraldehyde 3-phosphate: step 2/5. The polypeptide is Phosphoglycerate kinase (Streptococcus thermophilus (strain CNRZ 1066)).